Here is a 467-residue protein sequence, read N- to C-terminus: MSKKLPEDFIFGGATAAYQAEGAIKIDGKGPVAWDKFLEENYWYTAEPASDFYHQYPVDLKLCEEFGINGIRISIAWSRIFPNGYGEVNPKGVEFYHKLFAECKKRKVEPFVTLHHFDTPEVLHSNGDFLNRENIEHFVNYAKFCFEEFSEVNYWTTFNEIGPIGDGQYLVGKFPPGIKYDFEKLFQSHHNMVLAHAKAVNLFKKNGYHGEIGMVCALPTKYPYDPNNPKDVRAAELDDIIHNKFILDATFKGEYSKNTMEGVNHILQVNGGKLDLREEDFEELKAAKDLNDFLGINYYMSDWMAEYDGETEIIHNATGNKGSSKYQIKGVGQRKANESIPRTDWDWIIYPQGLYDQISRVKKDYPNYKKIYITENGLGYKDVFEDNTVYDDARIDYIRQHLEVISDAIKDGANVKGYFLWSLMDVFSWSNGYEKRYGLFYVDFETQKRYPKKSAYWYKKVSETKEV.

Residues glutamine 19, histidine 116, asparagine 159, glutamate 160, and asparagine 297 each coordinate D-galactose 6-phosphate. Glutamate 160 acts as the Proton donor in catalysis. Residue glutamate 375 is the Nucleophile of the active site. The D-galactose 6-phosphate site is built by serine 428, tryptophan 429, lysine 435, and tyrosine 437.

It belongs to the glycosyl hydrolase 1 family.

It carries out the reaction a 6-phospho-beta-D-galactoside + H2O = D-galactose 6-phosphate + an alcohol. The protein operates within carbohydrate metabolism; lactose degradation; D-galactose 6-phosphate and beta-D-glucose from lactose 6-phosphate: step 1/1. Its activity is regulated as follows. Inhibited by both galactose-6-phosphate and ATP. The protein is 6-phospho-beta-galactosidase of Leptotrichia buccalis (strain ATCC 14201 / DSM 1135 / JCM 12969 / NCTC 10249 / C-1013-b).